The following is a 338-amino-acid chain: Ketol-acid reductoisomerase (NADP(+)) (338 aa).

In terms of domain architecture, KARI N-terminal Rossmann spans 1–181 (MQVYYDKDCD…GGGRTGIIET (181 aa)). NADP(+)-binding positions include 24-27 (YGSQ), R47, S50, S52, and 82-85 (DEFQ). The active site involves H107. Residue G133 coordinates NADP(+). In terms of domain architecture, KARI C-terminal knotted spans 182–327 (TFKDETETDL…EKLRGMMPWI (146 aa)). The Mg(2+) site is built by D190, E194, E226, and E230. S251 lines the substrate pocket.

It belongs to the ketol-acid reductoisomerase family. It depends on Mg(2+) as a cofactor.

The catalysed reaction is (2R)-2,3-dihydroxy-3-methylbutanoate + NADP(+) = (2S)-2-acetolactate + NADPH + H(+). It carries out the reaction (2R,3R)-2,3-dihydroxy-3-methylpentanoate + NADP(+) = (S)-2-ethyl-2-hydroxy-3-oxobutanoate + NADPH + H(+). The protein operates within amino-acid biosynthesis; L-isoleucine biosynthesis; L-isoleucine from 2-oxobutanoate: step 2/4. It participates in amino-acid biosynthesis; L-valine biosynthesis; L-valine from pyruvate: step 2/4. Functionally, involved in the biosynthesis of branched-chain amino acids (BCAA). Catalyzes an alkyl-migration followed by a ketol-acid reduction of (S)-2-acetolactate (S2AL) to yield (R)-2,3-dihydroxy-isovalerate. In the isomerase reaction, S2AL is rearranged via a Mg-dependent methyl migration to produce 3-hydroxy-3-methyl-2-ketobutyrate (HMKB). In the reductase reaction, this 2-ketoacid undergoes a metal-dependent reduction by NADPH to yield (R)-2,3-dihydroxy-isovalerate. The protein is Ketol-acid reductoisomerase (NADP(+)) of Alcanivorax borkumensis (strain ATCC 700651 / DSM 11573 / NCIMB 13689 / SK2).